A 154-amino-acid polypeptide reads, in one-letter code: Protein SprT-like (154 aa).

The SprT-like domain maps to 6 to 144 (LQQLTETISL…CGTCHGKLKF (139 aa)). A Zn(2+)-binding site is contributed by His-67. The active site involves Glu-68. His-71 contributes to the Zn(2+) binding site.

This sequence belongs to the SprT family. Requires Zn(2+) as cofactor.

Its subcellular location is the cytoplasm. The protein is Protein SprT-like of Shouchella clausii (strain KSM-K16) (Alkalihalobacillus clausii).